A 306-amino-acid chain; its full sequence is MQKVLAIVGPTAIGKTDLAISLAQKLNGEIISGDSMQVYQEVEVGTAKATKEEQAKVKHYLVDNRSVFDEYSVKDFVDEAKKAISEVAKKGKLPILVGGTGFYVNALLNEMQLGERNDEERGTSQKWEDYLKENGAEKLWQILNEKDPTAAAKIPVPNSRRTMRALTVIDRTGKKFSEQQKKIKPRYDYLIIGLNSDRQEIYRRINLRVDKMMGKGMLEEAKFIYDNRDKEHQILQAIAYKEFFPYFDGEKSLEDCVTQLKTASRRYAKRQLTYFRNQLPIQWFDPLNDLECEQKIINKVREWENG.

Residue 9 to 16 coordinates ATP; sequence GPTAIGKT. 11–16 is a binding site for substrate; the sequence is TAIGKT. The tract at residues 34 to 37 is interaction with substrate tRNA; sequence DSMQ.

This sequence belongs to the IPP transferase family. As to quaternary structure, monomer. Mg(2+) is required as a cofactor.

The enzyme catalyses adenosine(37) in tRNA + dimethylallyl diphosphate = N(6)-dimethylallyladenosine(37) in tRNA + diphosphate. In terms of biological role, catalyzes the transfer of a dimethylallyl group onto the adenine at position 37 in tRNAs that read codons beginning with uridine, leading to the formation of N6-(dimethylallyl)adenosine (i(6)A). The polypeptide is tRNA dimethylallyltransferase (Lactobacillus acidophilus (strain ATCC 700396 / NCK56 / N2 / NCFM)).